The primary structure comprises 297 residues: MEQLRAELSHLLGEKLSRIECVNEKADTALWALYDSQGNPMPLMARSFSTPGKARQLAWKTTMLARSGTVRMPTIYGVMTHEEHPGPDVLLLERMRGVSVEAPARTPERWEQLKDQIVEALLAWHRQDSRGCVGAVDNTQENFWPSWYRQHVEVLWTTLNQFNNTGLTMQDKRILFRTRECLPALFEGFNDNCVLIHGNFCLRSMLKDSRSDQLLAMVGPGLMLWAPREYELFRLMDNSLAEDLLWSYLQRAPVAESFIWRRWLYVLWDEVAQLVNTGRFSRRNFDLASKSLLPWLA.

This is an uncharacterized protein from Escherichia coli O157:H7.